The chain runs to 376 residues: Lipid-A-disaccharide synthase (376 aa).

This sequence belongs to the LpxB family.

It catalyses the reaction a lipid X + a UDP-2-N,3-O-bis[(3R)-3-hydroxyacyl]-alpha-D-glucosamine = a lipid A disaccharide + UDP + H(+). Its pathway is bacterial outer membrane biogenesis; LPS lipid A biosynthesis. Condensation of UDP-2,3-diacylglucosamine and 2,3-diacylglucosamine-1-phosphate to form lipid A disaccharide, a precursor of lipid A, a phosphorylated glycolipid that anchors the lipopolysaccharide to the outer membrane of the cell. This is Lipid-A-disaccharide synthase from Coxiella burnetii (strain Dugway 5J108-111).